The primary structure comprises 931 residues: MAEYKDTLNLPNTSFPMKASLSVREPEMLADWQAKGIYQKIRKARVGSKRFILHDGPPYANGHLHCGHALNKILKDIIIKSKTFSGFDAPFVPGWDCHGLPIELNVEKKVGKAGSKISPREFRAKCREYAASQIDIQRDEFQRLGVLGDWYNPYVTMDYHYEANIVRALGLMIKNGHLQQGFKPVHWCIDCGSALAEAEVDYEDKTSPSIDVAFSAVNPSEFLNCFETQPAVKPLILPIWTTTPWTLPANEAVCLHPEIDYALIDAGNSYYIVATDLVESVMARYGISHYKTSGSAKGRVFEHFKLQHPFYKRQVPVVLAEHVTTESGTGCVHTAPAHGPDDYLVGQSYQLPLINPVMANGCFAENVELFAGISVLKANETILAVLSERNVLLASESIRHSYPHCWRHKSPMIFLATPQWFISMDKSNLRQAIINEIDKVNWVPDWGKARISNMVENRPDWCISRQRSWGTPMPLFVHKTTRELHPDTLELIERVAVMIEKSGIDAWFDLDSSELLGDDAKHYDKITDTMDVWLDSGISHYSVLKHNNDLDFPADVYFEGSDQHRGWFNSSLTTAVAMYGVAPYKTVLTHGYTVDAEGKKLSKSKGNYVALDKLVNQHGADILRLWVASTDYRHEVSISEEIIKRNADAYRRIRNTARFLLANLFDFNPASDCIEAKELLELDRWALKRCQLLQEEIITAYENYHFHLIYQKIHNFCAVDMGSFYLDLIKDRQYTTAKDSIARRSCQTAMYHMVKAFTIWLAPILSFTAEEIWQTIPGNNSESIFIEHWYDAWPIIDAVNMEDWEQLHIVRDEVNKALEETRQRGEIGSALAAEVTVYADAKALPKLTRLGEELRFLFITSEAKACPISQSPKGLAVTDCGVSIQVTASAHEKCARCWHRREDVGQNQEHPELCLRCVGNISGYHEERLYI.

The 'HIGH' region signature appears at 58 to 68 (PYANGHLHCGH). Position 559 (E559) interacts with L-isoleucyl-5'-AMP. Residues 600-604 (KLSKS) carry the 'KMSKS' region motif. ATP is bound at residue K603. Zn(2+)-binding residues include C894, C897, C914, and C917.

Belongs to the class-I aminoacyl-tRNA synthetase family. IleS type 1 subfamily. As to quaternary structure, monomer. Requires Zn(2+) as cofactor.

It is found in the cytoplasm. It catalyses the reaction tRNA(Ile) + L-isoleucine + ATP = L-isoleucyl-tRNA(Ile) + AMP + diphosphate. Functionally, catalyzes the attachment of isoleucine to tRNA(Ile). As IleRS can inadvertently accommodate and process structurally similar amino acids such as valine, to avoid such errors it has two additional distinct tRNA(Ile)-dependent editing activities. One activity is designated as 'pretransfer' editing and involves the hydrolysis of activated Val-AMP. The other activity is designated 'posttransfer' editing and involves deacylation of mischarged Val-tRNA(Ile). This chain is Isoleucine--tRNA ligase, found in Legionella pneumophila (strain Paris).